The following is a 134-amino-acid chain: MIEMLKTLPPTLREKKRYIAFKILYDEELKEGEVVNLIRKAVLEYYGSWGTSKANPWLVYYDFPYGILRCQRDNVDYVKASLILIREFKEKPVNIICLGVSGTIRKAKIKFLGIKKPKRWFVIRRERLKAKKQK.

It belongs to the eukaryotic/archaeal RNase P protein component 2 family. Consists of a catalytic RNA component and at least 4-5 protein subunits. Forms a subcomplex with Rnp3 which stimulates the catalytic RNA.

It localises to the cytoplasm. The enzyme catalyses Endonucleolytic cleavage of RNA, removing 5'-extranucleotides from tRNA precursor.. Its function is as follows. Part of ribonuclease P, a protein complex that generates mature tRNA molecules by cleaving their 5'-ends. The chain is Ribonuclease P protein component 2 from Methanocaldococcus jannaschii (strain ATCC 43067 / DSM 2661 / JAL-1 / JCM 10045 / NBRC 100440) (Methanococcus jannaschii).